Reading from the N-terminus, the 284-residue chain is MGVQANTRAIEKDIVTDFSERMSYASYLDLDTLLSAQKPVSRPEHHDELLFIIQHQTTELWLKLVLHETLAARAAFDEDDIGRALKCVARVKHIQKTLTEQWSVLATLTPTEYSEFRRFLGNSSGFQSYQYRAVEFVLGNKNAGMLAVFEADPAAHDLLGRLLAEPSLYDAFWQCLSRLGYDVPASALDRDVTAAYTLNEDLLPLIKFVYENHDEHWAVYEAFEEFVDLEENFQLWRFRHMRTVLRTIGMKSGTGGSSGVGFLQKALDLTFFPELLAVRTEIGR.

Substrate is bound by residues F51–H55, Y113, and R117. A heme-binding site is contributed by H240. T254 is a binding site for substrate.

This sequence belongs to the tryptophan 2,3-dioxygenase family. As to quaternary structure, homotetramer. Heme serves as cofactor.

It catalyses the reaction L-tryptophan + O2 = N-formyl-L-kynurenine. Its pathway is amino-acid degradation; L-tryptophan degradation via kynurenine pathway; L-kynurenine from L-tryptophan: step 1/2. In terms of biological role, heme-dependent dioxygenase that catalyzes the oxidative cleavage of the L-tryptophan (L-Trp) pyrrole ring and converts L-tryptophan to N-formyl-L-kynurenine. Catalyzes the oxidative cleavage of the indole moiety. The polypeptide is Tryptophan 2,3-dioxygenase (Rhodococcus jostii (strain RHA1)).